The primary structure comprises 308 residues: Ribosomal RNA large subunit methyltransferase F (308 aa).

Belongs to the methyltransferase superfamily. METTL16/RlmF family.

The protein resides in the cytoplasm. It catalyses the reaction adenosine(1618) in 23S rRNA + S-adenosyl-L-methionine = N(6)-methyladenosine(1618) in 23S rRNA + S-adenosyl-L-homocysteine + H(+). Specifically methylates the adenine in position 1618 of 23S rRNA. The polypeptide is Ribosomal RNA large subunit methyltransferase F (Salmonella heidelberg (strain SL476)).